A 275-amino-acid chain; its full sequence is Elongation factor Ts (275 aa).

Positions 76 to 79 are involved in Mg(2+) ion dislocation from EF-Tu; sequence TDFV.

The protein belongs to the EF-Ts family.

It is found in the cytoplasm. Functionally, associates with the EF-Tu.GDP complex and induces the exchange of GDP to GTP. It remains bound to the aminoacyl-tRNA.EF-Tu.GTP complex up to the GTP hydrolysis stage on the ribosome. The protein is Elongation factor Ts of Corynebacterium glutamicum (strain R).